Reading from the N-terminus, the 183-residue chain is Ribosome maturation factor RimM (183 aa).

The 80-residue stretch at 104 to 183 (EGDYYWKDLM…TIEVDWDPGF (80 aa)) folds into the PRC barrel domain.

The protein belongs to the RimM family. Binds ribosomal protein uS19.

It is found in the cytoplasm. In terms of biological role, an accessory protein needed during the final step in the assembly of 30S ribosomal subunit, possibly for assembly of the head region. Essential for efficient processing of 16S rRNA. May be needed both before and after RbfA during the maturation of 16S rRNA. It has affinity for free ribosomal 30S subunits but not for 70S ribosomes. The polypeptide is Ribosome maturation factor RimM (Salmonella arizonae (strain ATCC BAA-731 / CDC346-86 / RSK2980)).